The chain runs to 256 residues: Probable cyclic nucleotide phosphodiesterase Fisuc_1441/FSU_1912 (256 aa).

Residues Asp-20, His-22, Asp-59, Asn-89, His-156, His-196, and His-198 each contribute to the Fe cation site. Residues His-22, Asp-59, and 89-90 (NH) contribute to the AMP site. Position 198 (His-198) interacts with AMP.

It belongs to the cyclic nucleotide phosphodiesterase class-III family. The cofactor is Fe(2+).

This is Probable cyclic nucleotide phosphodiesterase Fisuc_1441/FSU_1912 from Fibrobacter succinogenes (strain ATCC 19169 / S85).